The sequence spans 813 residues: Calpain-7 (813 aa).

Methionine 1 bears the N-acetylmethionine mark. Threonine 95 carries the post-translational modification Phosphothreonine. Positions 232 to 540 (RERFAYPMPF…YDVVYLSWNP (309 aa)) constitute a Calpain catalytic domain. Residues cysteine 290, histidine 458, and asparagine 478 contribute to the active site. The tract at residues 541–701 (ALFKESTCIH…INGKWSGQSA (161 aa)) is domain III. The interval 702–813 (GGCGNFQETH…TVPIKTTQLQ (112 aa)) is domain N.

The protein belongs to the peptidase C2 family. As to expression, ubiquitous.

It localises to the nucleus. Its function is as follows. Calcium-regulated non-lysosomal thiol-protease. This Mus musculus (Mouse) protein is Calpain-7 (Capn7).